We begin with the raw amino-acid sequence, 490 residues long: ATP synthase subunit beta, chloroplastic (490 aa).

170–177 is an ATP binding site; that stretch reads GGAGVGKT.

It belongs to the ATPase alpha/beta chains family. In terms of assembly, F-type ATPases have 2 components, CF(1) - the catalytic core - and CF(0) - the membrane proton channel. CF(1) has five subunits: alpha(3), beta(3), gamma(1), delta(1), epsilon(1). CF(0) has four main subunits: a(1), b(1), b'(1) and c(9-12).

The protein localises to the plastid. Its subcellular location is the chloroplast thylakoid membrane. It carries out the reaction ATP + H2O + 4 H(+)(in) = ADP + phosphate + 5 H(+)(out). In terms of biological role, produces ATP from ADP in the presence of a proton gradient across the membrane. The catalytic sites are hosted primarily by the beta subunits. The sequence is that of ATP synthase subunit beta, chloroplastic from Calystegia sepium (Hedge bindweed).